The following is a 522-amino-acid chain: Ribonuclease Y (522 aa).

A helical transmembrane segment spans residues 7-27 (STILYCLFFFFLGIAAVLAFI). Residues 212-272 (TTSTVGVPTD…VRREVARMSL (61 aa)) enclose the KH domain. An HD domain is found at 338–431 (VLRHSVEVAF…VATADACSAS (94 aa)).

This sequence belongs to the RNase Y family.

Its subcellular location is the cell membrane. In terms of biological role, endoribonuclease that initiates mRNA decay. This Rhodopirellula baltica (strain DSM 10527 / NCIMB 13988 / SH1) protein is Ribonuclease Y.